The following is a 384-amino-acid chain: Ribosomal RNA large subunit methyltransferase G (384 aa).

Belongs to the methyltransferase superfamily. RlmG family.

It localises to the cytoplasm. The catalysed reaction is guanosine(1835) in 23S rRNA + S-adenosyl-L-methionine = N(2)-methylguanosine(1835) in 23S rRNA + S-adenosyl-L-homocysteine + H(+). In terms of biological role, specifically methylates the guanine in position 1835 (m2G1835) of 23S rRNA. This Streptomyces griseus subsp. griseus (strain JCM 4626 / CBS 651.72 / NBRC 13350 / KCC S-0626 / ISP 5235) protein is Ribosomal RNA large subunit methyltransferase G.